The chain runs to 130 residues: Small ribosomal subunit protein uS11c (130 aa).

This sequence belongs to the universal ribosomal protein uS11 family. Part of the 30S ribosomal subunit.

The protein localises to the plastid. Its subcellular location is the chloroplast. In Nephroselmis olivacea (Green alga), this protein is Small ribosomal subunit protein uS11c.